Consider the following 175-residue polypeptide: UPF0398 protein SPD_0338 (175 aa).

This sequence belongs to the UPF0398 family.

This Streptococcus pneumoniae serotype 2 (strain D39 / NCTC 7466) protein is UPF0398 protein SPD_0338.